Reading from the N-terminus, the 257-residue chain is Imidazole glycerol phosphate synthase subunit hisF1 (257 aa).

Catalysis depends on residues D11 and D130.

The protein belongs to the HisA/HisF family. Heterodimer of HisH and HisF.

The protein localises to the cytoplasm. It catalyses the reaction 5-[(5-phospho-1-deoxy-D-ribulos-1-ylimino)methylamino]-1-(5-phospho-beta-D-ribosyl)imidazole-4-carboxamide + L-glutamine = D-erythro-1-(imidazol-4-yl)glycerol 3-phosphate + 5-amino-1-(5-phospho-beta-D-ribosyl)imidazole-4-carboxamide + L-glutamate + H(+). It participates in amino-acid biosynthesis; L-histidine biosynthesis; L-histidine from 5-phospho-alpha-D-ribose 1-diphosphate: step 5/9. IGPS catalyzes the conversion of PRFAR and glutamine to IGP, AICAR and glutamate. The HisF subunit catalyzes the cyclization activity that produces IGP and AICAR from PRFAR using the ammonia provided by the HisH subunit. In Vibrio vulnificus (strain YJ016), this protein is Imidazole glycerol phosphate synthase subunit hisF1 (hisF1).